The primary structure comprises 271 residues: Glutamate racemase (271 aa).

Residues 10–11 (DS) and 42–43 (YG) contribute to the substrate site. Cys-73 acts as the Proton donor/acceptor in catalysis. 74 to 75 (NT) provides a ligand contact to substrate. Cys-183 serves as the catalytic Proton donor/acceptor. 184–185 (TH) provides a ligand contact to substrate.

This sequence belongs to the aspartate/glutamate racemases family.

It catalyses the reaction L-glutamate = D-glutamate. The protein operates within cell wall biogenesis; peptidoglycan biosynthesis. Its function is as follows. Provides the (R)-glutamate required for cell wall biosynthesis. The protein is Glutamate racemase of Lactococcus lactis subsp. lactis (strain IL1403) (Streptococcus lactis).